The following is a 140-amino-acid chain: Class I hydrophobin B (140 aa).

Positions 1-16 (MKFLAVVSLLAATALA) are cleaved as a signal peptide. Intrachain disulfides connect Cys-42–Cys-113, Cys-50–Cys-107, Cys-51–Cys-88, and Cys-114–Cys-133. N-linked (GlcNAc...) asparagine glycosylation is present at Asn-117.

The protein belongs to the fungal hydrophobin family. As to quaternary structure, self-assembles to form functional amyloid fibrils called rodlets. Self-assembly into fibrillar rodlets occurs spontaneously at hydrophobic:hydrophilic interfaces and the rodlets further associate laterally to form amphipathic monolayers.

The protein localises to the secreted. It is found in the spore wall. In terms of biological role, aerial growth, conidiation, and dispersal of filamentous fungi in the environment rely upon a capability of their secreting small amphipathic proteins called hydrophobins (HPBs) with low sequence identity. Class I can self-assemble into an outermost layer of rodlet bundles on aerial cell surfaces, conferring cellular hydrophobicity that supports fungal growth, development and dispersal; whereas Class II form highly ordered films at water-air interfaces through intermolecular interactions but contribute nothing to the rodlet structure. RodB is a class I hydrophobin that, unlike rodA, is not required for rodlet formation. The chain is Class I hydrophobin B from Aspergillus fumigatus (strain ATCC MYA-4609 / CBS 101355 / FGSC A1100 / Af293) (Neosartorya fumigata).